The following is a 199-amino-acid chain: Ribonuclease HII (199 aa).

The RNase H type-2 domain occupies 10–199 (RIEAGCDEAG…LLPEQLTLGF (190 aa)). Residues D16, E17, and D108 each contribute to the a divalent metal cation site.

The protein belongs to the RNase HII family. Mn(2+) serves as cofactor. Mg(2+) is required as a cofactor.

It localises to the cytoplasm. The enzyme catalyses Endonucleolytic cleavage to 5'-phosphomonoester.. Endonuclease that specifically degrades the RNA of RNA-DNA hybrids. The chain is Ribonuclease HII from Parabacteroides distasonis (strain ATCC 8503 / DSM 20701 / CIP 104284 / JCM 5825 / NCTC 11152).